Here is a 204-residue protein sequence, read N- to C-terminus: Guanylate kinase (204 aa).

Residues 5-184 enclose the Guanylate kinase-like domain; the sequence is GLLIVLSGPS…AVQRIKDIIA (180 aa). Residue 12–19 coordinates ATP; it reads GPSGVGKG.

This sequence belongs to the guanylate kinase family.

The protein localises to the cytoplasm. The enzyme catalyses GMP + ATP = GDP + ADP. In terms of biological role, essential for recycling GMP and indirectly, cGMP. This is Guanylate kinase from Enterococcus faecalis (strain ATCC 700802 / V583).